Here is a 1479-residue protein sequence, read N- to C-terminus: Protein CHROMATIN REMODELING 20 (1479 aa).

Positions 19 to 49 form a coiled coil; sequence EVIVESKEDEMDIIIEENREAEQEVMEVKAR. Residues 40–55 show a composition bias toward basic and acidic residues; it reads EQEVMEVKARDGRGEQ. Residues 40-109 are disordered; the sequence is EQEVMEVKAR…DELDLEKPLS (70 aa). Positions 76–86 are enriched in low complexity; sequence DASSRSESSDF. The segment covering 94 to 109 has biased composition (basic and acidic residues); sequence ILSRRDDELDLEKPLS. Residues 109 to 199 are a coiled coil; that stretch reads SEEEIDELIS…EQLDGAGIEL (91 aa). Residues 472-601 form the ADD domain; that stretch reads RDDSQNPANN…KKSIELSSDS (130 aa). The GATA-type; atypical zinc-finger motif lies at 483–514; that stretch reads RCTACNKVAVEVHSHPLLEVIVCMDCKRSIED. The PHD-type; atypical zinc-finger motif lies at 524-577; it reads ERHCEWCGHIADLIDCRTCEKLFCASCIKRNIGEEYMSEAQSSGWDCCCCSPIP. Positions 578–598 form a coiled coil; sequence LQRLTLELEKAMRDKKSIELS. The interval 594–615 is disordered; it reads SIELSSDSSSDSSSDNNSVDTD. Low complexity predominate over residues 598 to 615; sequence SSDSSSDSSSDNNSVDTD. Residues 741–924 enclose the Helicase ATP-binding domain; the sequence is VKSGDKGLGC…YCMVDFVREG (184 aa). 754 to 761 lines the ATP pocket; the sequence is HTMGLGKT. The DEAH box motif lies at 875–878; that stretch reads DEAH. In terms of domain architecture, Helicase C-terminal spans 1122 to 1290; it reads DILSMSADVG…QVHRTISKEE (169 aa). Residues 1400–1423 form a disordered region; the sequence is SESPVVPKPSPSTQTEPLPQPKGF.

The protein belongs to the SNF2/RAD54 helicase family.

It is found in the nucleus. The protein resides in the chromosome. Its subcellular location is the telomere. Functionally, involved in transcriptional regulation and chromatin remodeling. Facilitates DNA replication in multiple cellular environments and is required for efficient replication of a subset of genomic loci. Binds to DNA tandem repeat sequences in both telomeres and euchromatin and in vitro binds DNA quadruplex structures. May help stabilizing G-rich regions into regular chromatin structures by remodeling G4 DNA and incorporating H3.3-containing nucleosomes. Involved in DNA repair of gamma-irradiation-mediated damages. The polypeptide is Protein CHROMATIN REMODELING 20 (Arabidopsis thaliana (Mouse-ear cress)).